The chain runs to 34 residues: Leader peptide SpeFL (34 aa).

Positions 10 to 16 (HIRRTTH) match the Ornithine recognition loop motif. Arg13 provides a ligand contact to L-ornithine.

It belongs to the speF operon leader peptide family. As to quaternary structure, binds ornithine in stalled 70S ribosomes, blocking the upper two-thirds of the exit tunnel. Contacts 23S rRNA and ribosomal proteins L4 and L22.

Functionally, a small protein (arrest peptide) encoded upstream of inducible ornithine carboxylase gene (speF) that controls expression of downstream genes (speF and potE) by transcriptional and translational attenuation. Its expression controls transcription and translation of downstream SpeF; translation pausing at low Arg levels on this mRNA prevents premature Rho-dependent transcription termination of speF and also enhances SprF translation by preventing sequestration of its ribosome-binding site. In the presence of high Arg levels translation of this protein allows the formation of an speF mRNA structure that is degraded by RNase G. The protein is Leader peptide SpeFL of Salmonella typhimurium (strain SL1344).